Reading from the N-terminus, the 62-residue chain is Cecropin-A (62 aa).

Residues 1 to 20 (MNLVKILFCVFACLVFTVTA) form the signal peptide. The propeptide at 21-24 (VPEP) is removed by a dipeptidylpeptidase. The residue at position 60 (threonine 60) is a Threonine amide.

It belongs to the cecropin family.

It is found in the secreted. In terms of biological role, has antibacterial activity. This chain is Cecropin-A, found in Trichoplusia ni (Cabbage looper).